Consider the following 108-residue polypeptide: Nucleoid-associated protein Bphyt_1827 (108 aa).

Residues 87-108 (AQEKMGGMTSGLPLPPGFKLPF) are disordered. Residues 99-108 (PLPPGFKLPF) are compositionally biased toward pro residues.

It belongs to the YbaB/EbfC family. Homodimer.

It is found in the cytoplasm. The protein resides in the nucleoid. In terms of biological role, binds to DNA and alters its conformation. May be involved in regulation of gene expression, nucleoid organization and DNA protection. The protein is Nucleoid-associated protein Bphyt_1827 of Paraburkholderia phytofirmans (strain DSM 17436 / LMG 22146 / PsJN) (Burkholderia phytofirmans).